The primary structure comprises 464 residues: MDLKGKRVSVIGAGKSGIAAAQLLARKGATVFVSELGTMGAEEMQHLREMQIPFEEAGHSPAVYEADFCVISPGIPPHAEVVTTLQARNIPLYSEIELASRFCKARIVGITGTDGKTTTSTLVHALCEEDGLRNGYRAYSVGNIGVPFSSMVLDMKAGDIAVVELSSYQLERSPTLKPEVAVIMNITPDHLDRYAGELQGYAAAKFRIYANQGAGDTLIYNEDDALLREHFACRDQFPFNIMSFGMEPACKGVPDIRTFFLEGDTLVAHTPDGDEPVLVTSDFLKKSFRGRHNISNVLAAVAVAGALGIQREVVCQVIREFRGVEHRQEFVMTINGVDWVNDSKATNMNALRQALEALPATAVLIAGGRDKGNDYAAITRLVEKKVSLLIALGESQDKIVSAFKDVVAVKAAGSLEDAVLLARDAASSGQTVLFSPGCASFDMFKNFEDRGMQFKQCVHQLSSW.

112–118 is a binding site for ATP; sequence GTDGKTT.

It belongs to the MurCDEF family.

It is found in the cytoplasm. It carries out the reaction UDP-N-acetyl-alpha-D-muramoyl-L-alanine + D-glutamate + ATP = UDP-N-acetyl-alpha-D-muramoyl-L-alanyl-D-glutamate + ADP + phosphate + H(+). It participates in cell wall biogenesis; peptidoglycan biosynthesis. Its function is as follows. Cell wall formation. Catalyzes the addition of glutamate to the nucleotide precursor UDP-N-acetylmuramoyl-L-alanine (UMA). This Pelodictyon phaeoclathratiforme (strain DSM 5477 / BU-1) protein is UDP-N-acetylmuramoylalanine--D-glutamate ligase.